The chain runs to 449 residues: Glucose-6-phosphate isomerase (449 aa).

Glu-291 functions as the Proton donor in the catalytic mechanism. Residues His-312 and Lys-426 contribute to the active site.

Belongs to the GPI family.

Its subcellular location is the cytoplasm. It catalyses the reaction alpha-D-glucose 6-phosphate = beta-D-fructose 6-phosphate. The protein operates within carbohydrate biosynthesis; gluconeogenesis. It participates in carbohydrate degradation; glycolysis; D-glyceraldehyde 3-phosphate and glycerone phosphate from D-glucose: step 2/4. Catalyzes the reversible isomerization of glucose-6-phosphate to fructose-6-phosphate. In Streptococcus pneumoniae serotype 4 (strain ATCC BAA-334 / TIGR4), this protein is Glucose-6-phosphate isomerase.